The chain runs to 411 residues: Glutamate dehydrogenase (411 aa).

Residue K102 is part of the active site.

The protein belongs to the Glu/Leu/Phe/Val dehydrogenases family.

It catalyses the reaction L-glutamate + NAD(+) + H2O = 2-oxoglutarate + NH4(+) + NADH + H(+). The catalysed reaction is L-glutamate + NADP(+) + H2O = 2-oxoglutarate + NH4(+) + NADPH + H(+). This Zea mays (Maize) protein is Glutamate dehydrogenase (GDH1).